The sequence spans 524 residues: Putative ribose/galactose/methyl galactoside import ATP-binding protein 1 (524 aa).

ABC transporter domains lie at 29–270 (LEMR…VGRT) and 280–524 (VPIG…TGGH). ATP is bound at residue 61–68 (GENGAGKS).

It belongs to the ABC transporter superfamily. Carbohydrate importer 2 (CUT2) (TC 3.A.1.2) family.

It localises to the cell inner membrane. The enzyme catalyses D-ribose(out) + ATP + H2O = D-ribose(in) + ADP + phosphate + H(+). The catalysed reaction is D-galactose(out) + ATP + H2O = D-galactose(in) + ADP + phosphate + H(+). Its function is as follows. Part of an ABC transporter complex involved in carbohydrate import. Could be involved in ribose, galactose and/or methyl galactoside import. Responsible for energy coupling to the transport system. The polypeptide is Putative ribose/galactose/methyl galactoside import ATP-binding protein 1 (Rhizobium etli (strain ATCC 51251 / DSM 11541 / JCM 21823 / NBRC 15573 / CFN 42)).